The sequence spans 188 residues: MVNLNQSLGDLFKGIIPNVYVLGATIVSFLVLFLFITYFVYRPLKKYIKKRKDFLQNHIDLTIKSNVEAEKLEKKSQQKLLETKEFCIELKEKSQIEANKFLEDAKKTAIDNARQLINEGQKVLLEYENEIKSKYYMNVINVAVEICQKYLEKQDKNNKILQQSLIADLEKELRKRENSSKKKDNFGK.

The helical transmembrane segment at 19-39 (VYVLGATIVSFLVLFLFITYF) threads the bilayer.

The protein belongs to the ATPase B chain family. In terms of assembly, F-type ATPases have 2 components, F(1) - the catalytic core - and F(0) - the membrane proton channel. F(1) has five subunits: alpha(3), beta(3), gamma(1), delta(1), epsilon(1). F(0) has three main subunits: a(1), b(2) and c(10-14). The alpha and beta chains form an alternating ring which encloses part of the gamma chain. F(1) is attached to F(0) by a central stalk formed by the gamma and epsilon chains, while a peripheral stalk is formed by the delta and b chains.

The protein localises to the cell membrane. Its function is as follows. F(1)F(0) ATP synthase produces ATP from ADP in the presence of a proton or sodium gradient. F-type ATPases consist of two structural domains, F(1) containing the extramembraneous catalytic core and F(0) containing the membrane proton channel, linked together by a central stalk and a peripheral stalk. During catalysis, ATP synthesis in the catalytic domain of F(1) is coupled via a rotary mechanism of the central stalk subunits to proton translocation. In terms of biological role, component of the F(0) channel, it forms part of the peripheral stalk, linking F(1) to F(0). The chain is ATP synthase subunit b from Mesomycoplasma hyopneumoniae (strain 7448) (Mycoplasma hyopneumoniae).